Reading from the N-terminus, the 399-residue chain is Odorant receptor 42b (399 aa).

Residues 1–45 (MVFELIRPAPLTEQKRSRDGCIYLYRAMKFIGWLPPKQGVLRYVY) are Cytoplasmic-facing. A helical membrane pass occupies residues 46–66 (LTWTLMTFVWCTTYLPLGFLG). Residues 67 to 83 (SYMTQIKSFSPGEFLTS) are Extracellular-facing. The helical transmembrane segment at 84–104 (LQVCINAYGSSVKVAITYSML) threads the bilayer. The Cytoplasmic portion of the chain corresponds to 105 to 140 (WRLIKAKNILDQLDLRCTAMEEREKIHLVVARSNHA). A helical transmembrane segment spans residues 141–161 (FLIFTFVYCGYAGSTYLSSVL). At 162–178 (SGRPPWQLYNPFIDWHD) the chain is on the extracellular side. Residues 179–199 (GTLKLWVASTLEYMVMSGAVL) traverse the membrane as a helical segment. The Cytoplasmic segment spans residues 200 to 268 (QDQLSDSYPL…AIIKPVIQGT (69 aa)). Residues 269–289 (IFTQFLLIGLVLGFTLINVFF) form a helical membrane-spanning segment. The Extracellular portion of the chain corresponds to 290 to 292 (FSD). The helical transmembrane segment at 293–313 (IWTGIASFMFVITILLQTFPF) threads the bilayer. Residues 314-356 (CYTCNLIMEDCESLTHAIFQSNWVDASRRYKTTLLYFLQNVQQ) lie on the Cytoplasmic side of the membrane. Residues 357 to 377 (PIVFIAGGIFQISMSSNISVA) form a helical membrane-spanning segment. Over 378-399 (KFAFSVITITKQMNIADKFKTD) the chain is Extracellular.

It belongs to the insect chemoreceptor superfamily. Heteromeric odorant receptor channel (TC 1.A.69) family. Or2a subfamily. In terms of assembly, interacts with Orco. Complexes exist early in the endomembrane system in olfactory sensory neurons (OSNs), coupling these complexes to the conserved ciliary trafficking pathway. In terms of tissue distribution, expressed in olfactory sensory neurons in the antenna.

The protein localises to the cell membrane. Functionally, odorant receptor which mediates acceptance or avoidance behavior, depending on its substrates. The odorant receptor repertoire encodes a large collection of odor stimuli that vary widely in identity, intensity, and duration. May form a complex with Orco to form odorant-sensing units, providing sensitive and prolonged odorant signaling and calcium permeability. Involved in the behavioral responses to ethyl acetate and pentyl acetate. This is Odorant receptor 42b (Or42b) from Drosophila melanogaster (Fruit fly).